The chain runs to 167 residues: NADH-quinone oxidoreductase subunit B (167 aa).

[4Fe-4S] cluster is bound by residues Cys48, Cys49, Cys113, and Cys143.

It belongs to the complex I 20 kDa subunit family. As to quaternary structure, NDH-1 is composed of 14 different subunits. Subunits NuoB, C, D, E, F, and G constitute the peripheral sector of the complex. It depends on [4Fe-4S] cluster as a cofactor.

It localises to the cell membrane. The enzyme catalyses a quinone + NADH + 5 H(+)(in) = a quinol + NAD(+) + 4 H(+)(out). NDH-1 shuttles electrons from NADH, via FMN and iron-sulfur (Fe-S) centers, to quinones in the respiratory chain. Couples the redox reaction to proton translocation (for every two electrons transferred, four hydrogen ions are translocated across the cytoplasmic membrane), and thus conserves the redox energy in a proton gradient. This chain is NADH-quinone oxidoreductase subunit B, found in Wolbachia pipientis subsp. Culex pipiens (strain wPip).